Consider the following 324-residue polypeptide: MTKSIFEYKDDQDWYLASFGSYNHLTYFGDDEAYEQYVDFFQGLTNTLDVSGFQLHVVKHSSDLRLVSFILDCLKEELGRDLVVTQHQGTLLVSEGDKLLYVHVPREGVSLDGFFGSDNKSDFGDVLLIATRNEGKTKEFRKLFGKLGIKVENLNDYPDLPEVAETGMTFEENARLKAETISKLTGKMVLSDDSGLQVDVLGGLPGVWSARFAGPEATDAENNAKLLHELAMVLDDSKRSAQFHTTLVVAAPGRDSLVVDADWKGYIGREPKGDNGFGYDPLFLVGNTGRTAAELSTEEKNEQSHRGQAVKKLMEVFPAWQNKQ.

The unknown stretch occupies residues 1 to 126 (MTKSIFEYKD…SDNKSDFGDV (126 aa)). Residues 127–324 (LLIATRNEGK…EVFPAWQNKQ (198 aa)) form an NTP pyrophosphatase region. Position 131–136 (131–136 (TRNEGK)) interacts with substrate. Catalysis depends on Asp-193, which acts as the Proton acceptor. Asp-193 lines the Mg(2+) pocket. Substrate is bound by residues Ser-194, 277–280 (FGYD), Lys-300, and 305–306 (HR).

The protein belongs to the HAM1 NTPase family. As to quaternary structure, homodimer. Requires Mg(2+) as cofactor.

It carries out the reaction XTP + H2O = XMP + diphosphate + H(+). It catalyses the reaction dITP + H2O = dIMP + diphosphate + H(+). The catalysed reaction is ITP + H2O = IMP + diphosphate + H(+). Pyrophosphatase that catalyzes the hydrolysis of nucleoside triphosphates to their monophosphate derivatives, with a high preference for the non-canonical purine nucleotides XTP (xanthosine triphosphate), dITP (deoxyinosine triphosphate) and ITP. Seems to function as a house-cleaning enzyme that removes non-canonical purine nucleotides from the nucleotide pool, thus preventing their incorporation into DNA/RNA and avoiding chromosomal lesions. This is dITP/XTP pyrophosphatase from Streptococcus thermophilus (strain CNRZ 1066).